A 408-amino-acid polypeptide reads, in one-letter code: Na(+)-translocating NADH-quinone reductase subunit F (408 aa).

Residues 4-24 (VYLGVGMFTAIVLVLVLVILF) form a helical membrane-spanning segment. In terms of domain architecture, 2Fe-2S ferredoxin-type spans 33–127 (GDIIIGINGD…DMEIELDEEI (95 aa)). 4 residues coordinate [2Fe-2S] cluster: Cys70, Cys76, Cys79, and Cys111. Residues 130–270 (IKKWECDVIS…SGPFGEFFAK (141 aa)) form the FAD-binding FR-type domain.

This sequence belongs to the NqrF family. As to quaternary structure, composed of six subunits; NqrA, NqrB, NqrC, NqrD, NqrE and NqrF. The cofactor is [2Fe-2S] cluster. FAD serves as cofactor.

The protein resides in the cell inner membrane. It carries out the reaction a ubiquinone + n Na(+)(in) + NADH + H(+) = a ubiquinol + n Na(+)(out) + NAD(+). In terms of biological role, NQR complex catalyzes the reduction of ubiquinone-1 to ubiquinol by two successive reactions, coupled with the transport of Na(+) ions from the cytoplasm to the periplasm. The first step is catalyzed by NqrF, which accepts electrons from NADH and reduces ubiquinone-1 to ubisemiquinone by a one-electron transfer pathway. The sequence is that of Na(+)-translocating NADH-quinone reductase subunit F from Shewanella denitrificans (strain OS217 / ATCC BAA-1090 / DSM 15013).